A 273-amino-acid polypeptide reads, in one-letter code: MAGYISDDTRKVTTHRLVEMKQRGERISMLTSYDYTMAQIVDGAGMDVILVGDSASNVMAGNVTTLPITLDQMIYHAKSVVRGVKRAMVVVDMPFGSYQGNEMEGLASAIRIMKESHADALKLEGGEEIIDTVKRIISAGIPVMGHLGLMPQSINKYGTYTVRAKDDSEAEKLIRDAHLLEEAGCFAIVLEKIPATLAERVASELTIPIIGIGAGGHVDGQVLVIQDMLGMNNGFRPRFLRRYADLYTVMTDAISRYVSDVKNCDFPNEKEQY.

2 residues coordinate Mg(2+): aspartate 53 and aspartate 92. Residues 53-54, aspartate 92, and lysine 122 contribute to the 3-methyl-2-oxobutanoate site; that span reads DS. Position 124 (glutamate 124) interacts with Mg(2+). The Proton acceptor role is filled by glutamate 191.

This sequence belongs to the PanB family. Homodecamer; pentamer of dimers. The cofactor is Mg(2+).

It localises to the cytoplasm. The enzyme catalyses 3-methyl-2-oxobutanoate + (6R)-5,10-methylene-5,6,7,8-tetrahydrofolate + H2O = 2-dehydropantoate + (6S)-5,6,7,8-tetrahydrofolate. Its pathway is cofactor biosynthesis; (R)-pantothenate biosynthesis; (R)-pantoate from 3-methyl-2-oxobutanoate: step 1/2. Functionally, catalyzes the reversible reaction in which hydroxymethyl group from 5,10-methylenetetrahydrofolate is transferred onto alpha-ketoisovalerate to form ketopantoate. This chain is 3-methyl-2-oxobutanoate hydroxymethyltransferase, found in Bacteroides thetaiotaomicron (strain ATCC 29148 / DSM 2079 / JCM 5827 / CCUG 10774 / NCTC 10582 / VPI-5482 / E50).